The chain runs to 140 residues: Transcription antitermination protein NusB (140 aa).

This sequence belongs to the NusB family.

Its function is as follows. Involved in transcription antitermination. Required for transcription of ribosomal RNA (rRNA) genes. Binds specifically to the boxA antiterminator sequence of the ribosomal RNA (rrn) operons. The polypeptide is Transcription antitermination protein NusB (Leptospira biflexa serovar Patoc (strain Patoc 1 / Ames)).